We begin with the raw amino-acid sequence, 177 residues long: RNA pyrophosphohydrolase (177 aa).

One can recognise a Nudix hydrolase domain in the interval 6-149; it reads GYRPNVGIVI…KRDVYRRVMK (144 aa). A Nudix box motif is present at residues 38–59; that stretch reads GGINPGESAEQAMYRELFEEVG.

It belongs to the Nudix hydrolase family. RppH subfamily. It depends on a divalent metal cation as a cofactor.

Accelerates the degradation of transcripts by removing pyrophosphate from the 5'-end of triphosphorylated RNA, leading to a more labile monophosphorylated state that can stimulate subsequent ribonuclease cleavage. This chain is RNA pyrophosphohydrolase, found in Pectobacterium carotovorum subsp. carotovorum (strain PC1).